We begin with the raw amino-acid sequence, 240 residues long: Tetrahydromethanopterin S-methyltransferase subunit A (240 aa).

Over 1–218 (MADKKEPAPG…KFHSGVHAGK (218 aa)) the chain is Cytoplasmic. Residue His-85 participates in 5-hydroxybenzimidazolylcob(I)amide binding. A helical membrane pass occupies residues 219 to 239 (IEGAMIGLTVTISLLGLLLLG). A topological domain (extracellular) is located at residue Arg-240.

The protein belongs to the MtrA family. The complex is composed of 8 subunits; MtrA, MtrB, MtrC, MtrD, MtrE, MtrF, MtrG and MtrH. It depends on 5-hydroxybenzimidazolylcob(I)amide as a cofactor.

Its subcellular location is the cell membrane. The enzyme catalyses 5-methyl-5,6,7,8-tetrahydromethanopterin + coenzyme M + 2 Na(+)(in) = 5,6,7,8-tetrahydromethanopterin + methyl-coenzyme M + 2 Na(+)(out). It participates in one-carbon metabolism; methanogenesis from CO(2); methyl-coenzyme M from 5,10-methylene-5,6,7,8-tetrahydromethanopterin: step 2/2. Functionally, part of a complex that catalyzes the formation of methyl-coenzyme M and tetrahydromethanopterin from coenzyme M and methyl-tetrahydromethanopterin. This is an energy-conserving, sodium-ion translocating step. This chain is Tetrahydromethanopterin S-methyltransferase subunit A, found in Methanosarcina barkeri (strain Fusaro / DSM 804).